A 287-amino-acid polypeptide reads, in one-letter code: uncharacterized protein (287 aa).

Disordered regions lie at residues 109-175 (QEES…SSQD), 203-223 (IPPP…SQPV), and 257-287 (KESE…SSEE). Over residues 110-136 (EESSSSLEEGIIEDPVVATPSPASAAP) the composition is skewed to low complexity. Basic and acidic residues predominate over residues 143-152 (RKEFKNEKWK). The span at 153 to 162 (EKKKQGRRRN) shows a compositional bias: basic residues. Positions 273 to 287 (SLEEASVHDRISSEE) are enriched in basic and acidic residues.

This sequence belongs to the chlamydial CPn_0623/CT_504/TC_0791 family.

This is an uncharacterized protein from Chlamydia muridarum (strain MoPn / Nigg).